The chain runs to 97 residues: Biogenesis of lysosome-related organelles complex 1 subunit SNN1 (97 aa).

Positions 45–97 form a coiled coil; it reads VVRLKQIRNLLKEEQEYYNEEEGLGVERERLEELELRVEKLTQKYKKLLADCV.

It belongs to the SNAPIN family. In terms of assembly, component of the biogenesis of lysosome-related organelles complex-1 (BLOC-1).

The protein resides in the endosome. In terms of biological role, component of the biogenesis of lysosome-related organelles complex-1 (BLOC-1), a complex involved in endosomal cargo sorting. The chain is Biogenesis of lysosome-related organelles complex 1 subunit SNN1 (SNN1) from Lachancea thermotolerans (strain ATCC 56472 / CBS 6340 / NRRL Y-8284) (Yeast).